Reading from the N-terminus, the 294-residue chain is Methionine aminopeptidase (294 aa).

His-65 is a substrate binding site. Asp-85, Asp-96, and His-156 together coordinate a divalent metal cation. His-164 provides a ligand contact to substrate. A divalent metal cation is bound by residues Glu-189 and Glu-279.

Belongs to the peptidase M24A family. Methionine aminopeptidase archaeal type 2 subfamily. As to quaternary structure, monomer. The cofactor is Co(2+). Requires Zn(2+) as cofactor. It depends on Mn(2+) as a cofactor. Fe(2+) serves as cofactor.

The enzyme catalyses Release of N-terminal amino acids, preferentially methionine, from peptides and arylamides.. Functionally, removes the N-terminal methionine from nascent proteins. The N-terminal methionine is often cleaved when the second residue in the primary sequence is small and uncharged (Met-Ala-, Cys, Gly, Pro, Ser, Thr, or Val). The chain is Methionine aminopeptidase from Methanocaldococcus jannaschii (strain ATCC 43067 / DSM 2661 / JAL-1 / JCM 10045 / NBRC 100440) (Methanococcus jannaschii).